The following is a 349-amino-acid chain: E3 ubiquitin-protein ligase rnf146 (349 aa).

The tract at residues 1 to 21 (MASCGEVDHSVSSLPSSKKGS) is disordered. A compositionally biased stretch (low complexity) spans 10 to 21 (SVSSLPSSKKGS). Residues 41–79 (CAICLQSCVHPVQLPCRHVFCFLCVKGASWQSKRCALCR) form an RING-type zinc finger. One can recognise a WWE domain in the interval 97 to 173 (ELKTGGRGAT…EHGRRRKIKR (77 aa)). Residues Y113, R116, W120, Y150, Q159, R169, and K181 each contribute to the a glycoprotein site. Disordered stretches follow at residues 226-251 (TTVL…SPSL) and 264-349 (DAPE…CTEV). Over residues 283 to 292 (SMSSSPNTYA) the composition is skewed to polar residues. Positions 298 to 307 (WSDDEGDGEA) are enriched in acidic residues. Over residues 308 to 317 (VEPREQRLRL) the composition is skewed to basic and acidic residues.

The protein resides in the cytoplasm. It localises to the cytosol. It is found in the nucleus. It carries out the reaction S-ubiquitinyl-[E2 ubiquitin-conjugating enzyme]-L-cysteine + [acceptor protein]-L-lysine = [E2 ubiquitin-conjugating enzyme]-L-cysteine + N(6)-ubiquitinyl-[acceptor protein]-L-lysine.. Its pathway is protein modification; protein ubiquitination. E3 ubiquitin-protein ligase that specifically binds poly-ADP-ribosylated proteins and mediates their ubiquitination and subsequent degradation. May regulate many important biological processes, such as cell survival and DNA damage response. Acts as an activator of the Wnt signaling pathway by mediating the ubiquitination of poly-ADP-ribosylated proteins. Neuroprotective protein. Protects against cell death induced by DNA damaging agents and rescues cells from G1 arrest. Promotes cell survival after gamma-irradiation. Facilitates DNA repair. This is E3 ubiquitin-protein ligase rnf146 (rnf146) from Salmo salar (Atlantic salmon).